We begin with the raw amino-acid sequence, 490 residues long: ATP synthase subunit beta, chloroplastic (490 aa).

170–177 (GGAGVGKT) is a binding site for ATP.

Belongs to the ATPase alpha/beta chains family. F-type ATPases have 2 components, CF(1) - the catalytic core - and CF(0) - the membrane proton channel. CF(1) has five subunits: alpha(3), beta(3), gamma(1), delta(1), epsilon(1). CF(0) has four main subunits: a(1), b(1), b'(1) and c(9-12).

Its subcellular location is the plastid. The protein resides in the chloroplast thylakoid membrane. The catalysed reaction is ATP + H2O + 4 H(+)(in) = ADP + phosphate + 5 H(+)(out). Produces ATP from ADP in the presence of a proton gradient across the membrane. The catalytic sites are hosted primarily by the beta subunits. In Pinus koraiensis (Korean pine), this protein is ATP synthase subunit beta, chloroplastic.